Consider the following 135-residue polypeptide: ATP synthase epsilon chain (135 aa).

It belongs to the ATPase epsilon chain family. In terms of assembly, F-type ATPases have 2 components, CF(1) - the catalytic core - and CF(0) - the membrane proton channel. CF(1) has five subunits: alpha(3), beta(3), gamma(1), delta(1), epsilon(1). CF(0) has three main subunits: a, b and c.

It is found in the cellular thylakoid membrane. Produces ATP from ADP in the presence of a proton gradient across the membrane. The sequence is that of ATP synthase epsilon chain from Prochlorococcus marinus (strain MIT 9211).